Consider the following 673-residue polypeptide: Putative K(+)-stimulated pyrophosphate-energized sodium pump (673 aa).

5 helical membrane-spanning segments follow: residues Ser-3–Ser-23, Ile-62–Ile-82, Gly-84–Val-104, Val-127–Phe-147, and Val-154–Ile-174. Lys-177 provides a ligand contact to substrate. Residues Asp-180, Asp-184, Asn-207, and Asp-210 each contribute to the Mg(2+) site. A run of 6 helical transmembrane segments spans residues Leu-222 to Ala-242, Val-247 to Phe-267, Ala-279 to Ser-299, Ile-302 to Ile-322, Leu-364 to Gly-384, and Ala-387 to Leu-407. Asp-419 contributes to the Mg(2+) binding site. 4 helical membrane passes run Ala-449–Ala-469, Val-486–Met-506, Glu-553–Gly-573, and Ala-576–Ser-596. Ca(2+)-binding residues include Asp-603, Asp-629, and Asp-633. Lys-636 contributes to the substrate binding site. The chain crosses the membrane as a helical span at residues Ile-652–Ile-672.

It belongs to the H(+)-translocating pyrophosphatase (TC 3.A.10) family. K(+)-stimulated subfamily. In terms of assembly, homodimer. Requires Mg(2+) as cofactor.

Its subcellular location is the cell membrane. It carries out the reaction Na(+)(in) + diphosphate + H2O = Na(+)(out) + 2 phosphate + H(+). Its activity is regulated as follows. Requires K(+) for maximal activity. Functionally, sodium pump that utilizes the energy of pyrophosphate hydrolysis as the driving force for Na(+) movement across the membrane. This is Putative K(+)-stimulated pyrophosphate-energized sodium pump from Clostridium tetani (strain Massachusetts / E88).